The chain runs to 439 residues: AP-2 complex subunit mu (439 aa).

An MHD domain is found at 172–438; that stretch reads RNELYIDVVE…LTKAGTYQNR (267 aa).

Belongs to the adaptor complexes medium subunit family. As to quaternary structure, adaptor protein complex 2 (AP-2) is a heterotetramer composed of two large adaptins (alpha-type and beta-type subunits), a medium adaptin (mu-type subunit AP50) and a small adaptin (sigma-type subunit AP17). Phosphorylated.

It localises to the cell membrane. It is found in the membrane. The protein localises to the coated pit. Component of the adaptor complexes which link clathrin to receptors in coated vesicles. Clathrin-associated protein complexes are believed to interact with the cytoplasmic tails of membrane proteins, leading to their selection and concentration. AP50 is a subunit of the plasma membrane adaptor. The sequence is that of AP-2 complex subunit mu (apm2) from Dictyostelium discoideum (Social amoeba).